Here is a 283-residue protein sequence, read N- to C-terminus: Pantothenate synthetase (283 aa).

An ATP-binding site is contributed by 30–37; the sequence is MGNLHSGH. H37 acts as the Proton donor in catalysis. Q61 provides a ligand contact to (R)-pantoate. Q61 is a binding site for beta-alanine. 149-152 contributes to the ATP binding site; the sequence is GQKD. Position 155 (Q155) interacts with (R)-pantoate. ATP contacts are provided by residues V178 and 186–189; that span reads LSSR.

Belongs to the pantothenate synthetase family. In terms of assembly, homodimer.

The protein localises to the cytoplasm. The catalysed reaction is (R)-pantoate + beta-alanine + ATP = (R)-pantothenate + AMP + diphosphate + H(+). It participates in cofactor biosynthesis; (R)-pantothenate biosynthesis; (R)-pantothenate from (R)-pantoate and beta-alanine: step 1/1. Functionally, catalyzes the condensation of pantoate with beta-alanine in an ATP-dependent reaction via a pantoyl-adenylate intermediate. This Pseudomonas fluorescens (strain SBW25) protein is Pantothenate synthetase.